We begin with the raw amino-acid sequence, 148 residues long: Large ribosomal subunit protein bL9 (148 aa).

Belongs to the bacterial ribosomal protein bL9 family.

In terms of biological role, binds to the 23S rRNA. The polypeptide is Large ribosomal subunit protein bL9 (Bacillus cereus (strain B4264)).